A 156-amino-acid polypeptide reads, in one-letter code: Ribosomal RNA large subunit methyltransferase H (156 aa).

S-adenosyl-L-methionine contacts are provided by residues leucine 72, glycine 104, and 123 to 128 (LGPMTF).

The protein belongs to the RNA methyltransferase RlmH family. As to quaternary structure, homodimer.

The protein resides in the cytoplasm. It carries out the reaction pseudouridine(1915) in 23S rRNA + S-adenosyl-L-methionine = N(3)-methylpseudouridine(1915) in 23S rRNA + S-adenosyl-L-homocysteine + H(+). Specifically methylates the pseudouridine at position 1915 (m3Psi1915) in 23S rRNA. The chain is Ribosomal RNA large subunit methyltransferase H from Nitratidesulfovibrio vulgaris (strain ATCC 29579 / DSM 644 / CCUG 34227 / NCIMB 8303 / VKM B-1760 / Hildenborough) (Desulfovibrio vulgaris).